The primary structure comprises 305 residues: Phosphatidate cytidylyltransferase (305 aa).

The next 8 membrane-spanning stretches (helical) occupy residues 27–47, 67–87, 96–116, 124–144, 150–170, 202–222, 232–252, and 277–297; these read FLVI…VGLL, FPFS…ALTC, FPEH…IRLV, LGPI…SVPI, ILYG…AIFL, TVVG…LFYS, IAVP…GFFG, and MLDV…ILLI.

This sequence belongs to the CDS family.

The protein resides in the cell membrane. The enzyme catalyses a 1,2-diacyl-sn-glycero-3-phosphate + CTP + H(+) = a CDP-1,2-diacyl-sn-glycerol + diphosphate. The protein operates within phospholipid metabolism; CDP-diacylglycerol biosynthesis; CDP-diacylglycerol from sn-glycerol 3-phosphate: step 3/3. The chain is Phosphatidate cytidylyltransferase (cdsA) from Chlamydia trachomatis serovar D (strain ATCC VR-885 / DSM 19411 / UW-3/Cx).